A 440-amino-acid chain; its full sequence is Chromosomal replication initiator protein DnaA (440 aa).

Residues 1 to 74 (MNPSQILENL…VQSGNKAIIN (74 aa)) are domain I, interacts with DnaA modulators. The domain II stretch occupies residues 74–99 (NIQAQSAKQSNKSTKIDIAHIKAQST). The tract at residues 100–316 (ILNPSFTFES…GIIISLNAYA (217 aa)) is domain III, AAA+ region. Positions 146, 148, 149, and 150 each coordinate ATP. The domain IV, binds dsDNA stretch occupies residues 317–440 (TILGQEITLE…KNKILVKSQS (124 aa)).

This sequence belongs to the DnaA family. Oligomerizes as a right-handed, spiral filament on DNA at oriC.

The protein resides in the cytoplasm. Its function is as follows. Plays an essential role in the initiation and regulation of chromosomal replication. ATP-DnaA binds to the origin of replication (oriC) to initiate formation of the DNA replication initiation complex once per cell cycle. Binds the DnaA box (a 9 base pair repeat at the origin) and separates the double-stranded (ds)DNA. Forms a right-handed helical filament on oriC DNA; dsDNA binds to the exterior of the filament while single-stranded (ss)DNA is stabiized in the filament's interior. The ATP-DnaA-oriC complex binds and stabilizes one strand of the AT-rich DNA unwinding element (DUE), permitting loading of DNA polymerase. After initiation quickly degrades to an ADP-DnaA complex that is not apt for DNA replication. Binds acidic phospholipids. This chain is Chromosomal replication initiator protein DnaA, found in Campylobacter jejuni subsp. jejuni serotype O:2 (strain ATCC 700819 / NCTC 11168).